Reading from the N-terminus, the 733-residue chain is Catalase-peroxidase 2 (733 aa).

Positions 1 to 35 are disordered; it reads MAEAETHPPIGESQTEPAESGCPMRIKPPVEGGSN. The segment at residues 106-234 is a cross-link (tryptophyl-tyrosyl-methioninium (Trp-Tyr) (with M-260)); the sequence is WHAAGTYRVE…PXXPHMGLIY (129 aa). Histidine 107 acts as the Proton acceptor in catalysis. Positions 234–260 form a cross-link, tryptophyl-tyrosyl-methioninium (Tyr-Met) (with W-106); the sequence is YVNPEGPEGNPDYLAAAIDIRETFGRM. Histidine 275 contacts heme.

It belongs to the peroxidase family. Peroxidase/catalase subfamily. In terms of assembly, homodimer or homotetramer. Heme b is required as a cofactor. In terms of processing, formation of the three residue Trp-Tyr-Met cross-link is important for the catalase, but not the peroxidase activity of the enzyme.

It catalyses the reaction H2O2 + AH2 = A + 2 H2O. The enzyme catalyses 2 H2O2 = O2 + 2 H2O. Bifunctional enzyme with both catalase and broad-spectrum peroxidase activity. May play a role in the intracellular survival of mycobacteria. The polypeptide is Catalase-peroxidase 2 (Mycolicibacterium fortuitum (Mycobacterium fortuitum)).